Here is a 279-residue protein sequence, read N- to C-terminus: Presqualene diphosphate synthase (279 aa).

This sequence belongs to the phytoene/squalene synthase family. HpnD subfamily.

It catalyses the reaction 2 (2E,6E)-farnesyl diphosphate = presqualene diphosphate + diphosphate. Its pathway is secondary metabolite biosynthesis; hopanoid biosynthesis. Functionally, involved in the biosynthesis of the hopanoid precursor squalene (SQ) from farnesyl diphosphate (FPP). Catalyzes the first step, the formation of presqualene diphosphate (PSPP) from two molecules of FPP. In Sinorhizobium fredii (strain NBRC 101917 / NGR234), this protein is Presqualene diphosphate synthase.